A 351-amino-acid chain; its full sequence is Ribosomal RNA large subunit methyltransferase M (351 aa).

S-adenosyl-L-methionine is bound by residues S186, 219 to 222 (APGG), D238, D258, and D274. Residue K303 is the Proton acceptor of the active site.

It belongs to the class I-like SAM-binding methyltransferase superfamily. RNA methyltransferase RlmE family. RlmM subfamily. Monomer.

Its subcellular location is the cytoplasm. It catalyses the reaction cytidine(2498) in 23S rRNA + S-adenosyl-L-methionine = 2'-O-methylcytidine(2498) in 23S rRNA + S-adenosyl-L-homocysteine + H(+). Functionally, catalyzes the 2'-O-methylation at nucleotide C2498 in 23S rRNA. In Xylella fastidiosa (strain 9a5c), this protein is Ribosomal RNA large subunit methyltransferase M.